The primary structure comprises 191 residues: Gastrokine-3 (191 aa).

Residues 1–30 (MPLHSLERDNMRRLIAPSILVTVFLVPALA) form the signal peptide. N-linked (GlcNAc...) asparagine glycosylation occurs at Asn-33. The BRICHOS domain occupies 63–155 (NSVQSEWDGV…LCRAVPTYFA (93 aa)). The cysteines at positions 90 and 147 are disulfide-linked.

Belongs to the gastrokine family. Expressed in stomach. Present in mucus cells at the base of antral glands, and Brunner glands of the duodenum. Present at lower levels in the mucus neck cell region of the fundus (at protein level).

The protein localises to the secreted. Inhibits gastric epithelial cell proliferation. The polypeptide is Gastrokine-3 (Gkn3) (Mus musculus (Mouse)).